The chain runs to 216 residues: Orotate phosphoribosyltransferase (216 aa).

Position 30 (lysine 30) interacts with 5-phospho-alpha-D-ribose 1-diphosphate. 38–39 (FF) provides a ligand contact to orotate. 5-phospho-alpha-D-ribose 1-diphosphate contacts are provided by residues 75–76 (YK), arginine 102, lysine 103, lysine 106, histidine 108, and 128–136 (DDVITAGTA). Residues threonine 132 and arginine 160 each coordinate orotate.

Belongs to the purine/pyrimidine phosphoribosyltransferase family. PyrE subfamily. In terms of assembly, homodimer. Mg(2+) serves as cofactor.

It catalyses the reaction orotidine 5'-phosphate + diphosphate = orotate + 5-phospho-alpha-D-ribose 1-diphosphate. It participates in pyrimidine metabolism; UMP biosynthesis via de novo pathway; UMP from orotate: step 1/2. Functionally, catalyzes the transfer of a ribosyl phosphate group from 5-phosphoribose 1-diphosphate to orotate, leading to the formation of orotidine monophosphate (OMP). The sequence is that of Orotate phosphoribosyltransferase from Acinetobacter baumannii (strain ATCC 17978 / DSM 105126 / CIP 53.77 / LMG 1025 / NCDC KC755 / 5377).